The chain runs to 151 residues: Transcriptional repressor NrdR (151 aa).

Residues 3 to 34 (CPFCSSDNTRVIDSRPADDNSSIRRRRLCDDC) fold into a zinc finger. Residues 49-139 (LIVIKKDNNR…VYREFKDVNT (91 aa)) form the ATP-cone domain.

It belongs to the NrdR family. Zn(2+) is required as a cofactor.

Its function is as follows. Negatively regulates transcription of bacterial ribonucleotide reductase nrd genes and operons by binding to NrdR-boxes. In Agathobacter rectalis (strain ATCC 33656 / DSM 3377 / JCM 17463 / KCTC 5835 / VPI 0990) (Eubacterium rectale), this protein is Transcriptional repressor NrdR.